The primary structure comprises 890 residues: Kinesin-like protein KIF20A (890 aa).

Position 2 is an N-acetylserine (Ser-2). Phosphoserine is present on residues Ser-7, Ser-14, and Ser-21. In terms of domain architecture, Kinesin motor spans 64-507 (KVKVYLRVRP…AKFSAIASQL (444 aa)). 160 to 167 (GVTNSGKT) is a binding site for ATP. A Phosphoserine; by PLK1 modification is found at Ser-528. Residues Ser-532, Ser-662, Ser-668, Ser-685, and Ser-825 each carry the phosphoserine modification. The stretch at 611–762 (LDTQKELLEE…ESLQSAERAC (152 aa)) forms a coiled coil. Residues 763-890 (CHSTGAGKLR…LKSGPFGKKY (128 aa)) form a globular region. The interval 832–865 (TNQENQQPNQQPPGKKPFLRNLLPRTPTCQSSTD) is disordered. Thr-857 bears the Phosphothreonine mark. Ser-867, Ser-878, and Ser-883 each carry phosphoserine.

The protein belongs to the TRAFAC class myosin-kinesin ATPase superfamily. Kinesin family. Post-translationally, phosphorylated by PLK1 at Ser-528 during mitosis, creating a docking site for PLK1 and recruiting PLK1 at central spindle.

The protein resides in the golgi apparatus. Its subcellular location is the cytoplasm. The protein localises to the cytoskeleton. It localises to the spindle. Mitotic kinesin required for chromosome passenger complex (CPC)-mediated cytokinesis. Following phosphorylation by PLK1, involved in recruitment of PLK1 to the central spindle. Interacts with guanosine triphosphate (GTP)-bound forms of RAB6A and RAB6B. May act as a motor required for the retrograde RAB6 regulated transport of Golgi membranes and associated vesicles along microtubules. Has a microtubule plus end-directed motility. The protein is Kinesin-like protein KIF20A (KIF20A) of Homo sapiens (Human).